The chain runs to 137 residues: Large ribosomal subunit protein uL16 (137 aa).

It belongs to the universal ribosomal protein uL16 family. As to quaternary structure, part of the 50S ribosomal subunit.

Functionally, binds 23S rRNA and is also seen to make contacts with the A and possibly P site tRNAs. In Coxiella burnetii (strain RSA 331 / Henzerling II), this protein is Large ribosomal subunit protein uL16.